Reading from the N-terminus, the 315-residue chain is Heterodimeric geranylgeranyl pyrophosphate synthase small subunit 1, chloroplastic (315 aa).

Mg(2+) is bound by residues Asp-124 and Gly-130. Residues Lys-228, Gln-265, and Lys-280 each coordinate dimethylallyl diphosphate.

The protein belongs to the FPP/GGPP synthase family. As to quaternary structure, part of a heterodimeric geranyl(geranyl)diphosphate synthase. Mg(2+) serves as cofactor. In terms of tissue distribution, mainly expressed in trichomes, and, to a lower extent, in roots, leaves, flowers and stems.

The protein resides in the plastid. It localises to the chloroplast thylakoid membrane. Its subcellular location is the chloroplast. Its function is as follows. Heterodimeric geranyl(geranyl)-diphosphate (GPP) synthase small subunit. The small subunit alone is inactive in vitro while the large subunit GGPPS1 catalyzes mainly the production of geranygeranyl-diphosphate in vitro. Upon association of the two subunits, the product profile changes and the production of gerany-diphosphate is strongly increased. The protein is Heterodimeric geranylgeranyl pyrophosphate synthase small subunit 1, chloroplastic of Cannabis sativa (Hemp).